The primary structure comprises 393 residues: MDENESNQSLMTSSQYPKEAVRKRQNSARNSGASDSSRFSRKSFKLDYRLEEDVTKSKKGKDGRFVNPWPTWKNPSIPNVLRWLIMEKDHSSVPSSKEELDKELPVLKPYFITNPEEAGVREAGLRVTWLGHATVMVEMDELIFLTDPIFSSRASPSQYMGPKRFRRSPCTISELPPIDAVLISHNHYDHLDYNSVIALNERFGNELRWFVPLGLLDWMQKCGCENVIELDWWEENCVPGHDKVTFVFTPSQHWCKRTLMDDNKVLWGSWSVLGPWNRFFFAGDTGYCPAFEEIGKRFGPFDLAAIPIGAYEPRWFMKYQHVDPEEAVRIHTDVQTKKSMAIHWGTFALANEHYLEPPVKLNEALERYGLNAEDFFVLKHGESRYLNNDDENF.

Methionine 1 bears the N-acetylmethionine mark. Positions 1-16 are enriched in polar residues; the sequence is MDENESNQSLMTSSQY. Positions 1 to 40 are disordered; the sequence is MDENESNQSLMTSSQYPKEAVRKRQNSARNSGASDSSRFS. Zn(2+) is bound by residues histidine 185 and histidine 187. Residue tyrosine 188 coordinates an N-acyl-1,2-diacyl-sn-glycero-3-phosphoethanolamine. Zn(2+)-binding residues include aspartate 189, histidine 190, and histidine 253. Deoxycholate-binding residues include lysine 256 and methionine 260. Zn(2+) is bound at residue aspartate 284. Histidine 321 contacts an N-acyl-1,2-diacyl-sn-glycero-3-phosphoethanolamine. Histidine 343 contacts Zn(2+). Residue alanine 348 coordinates deoxycholate.

The protein belongs to the NAPE-PLD family. Homodimer. Bile acids promote the assembly of inactive monomers into an active dimer and enable catalysis. It depends on Zn(2+) as a cofactor. As to expression, widely expressed. Highest expression in brain, kidney and testis (at protein level). Expressed in adipose tissue (at protein level).

It localises to the golgi apparatus membrane. The protein localises to the early endosome membrane. The protein resides in the nucleus envelope. It is found in the nucleus. Its subcellular location is the nucleoplasm. The enzyme catalyses an N-acyl-1,2-diacyl-sn-glycero-3-phosphoethanolamine + H2O = an N-acylethanolamine + a 1,2-diacyl-sn-glycero-3-phosphate + H(+). The catalysed reaction is N-butanoyl-1-hexadecanoyl-2-(9Z,12Z-octadecadienoyl)-sn-glycero-3-phosphoethanolamine + H2O = N-butanoyl ethanolamine + 1-hexadecanoyl-2-(9Z,12Z-octadecadienoyl)-sn-glycero-3-phosphate + H(+). It carries out the reaction N-hexanoyl-1-hexadecanoyl-2-(9Z,12Z-octadecadienoyl)-sn-glycero-3-phosphoethanolamine + H2O = N-hexanoyl ethanolamine + 1-hexadecanoyl-2-(9Z,12Z-octadecadienoyl)-sn-glycero-3-phosphate + H(+). It catalyses the reaction N-octanoyl-1-hexadecanoyl-2-(9Z,12Z-octadecadienoyl)-sn-glycero-3-phosphoethanolamine + H2O = N-octanoyl ethanolamine + 1-hexadecanoyl-2-(9Z,12Z-octadecadienoyl)-sn-glycero-3-phosphate + H(+). The enzyme catalyses N-decanoyl-1-hexadecanoyl-2-(9Z,12Z-octadecadienoyl)-sn-glycero-3-phosphoethanolamine + H2O = N-decanoyl ethanolamine + 1-hexadecanoyl-2-(9Z,12Z-octadecadienoyl)-sn-glycero-3-phosphate + H(+). The catalysed reaction is N-dodecanoyl-1,2-di-(9Z-octadecenoyl)-sn-glycero-3-phosphoethanolamine + H2O = N-dodecanoylethanolamine + 1,2-di-(9Z-octadecenoyl)-sn-glycero-3-phosphate + H(+). It carries out the reaction N-tetradecanoyl-1,2-di-(9Z-octadecenoyl)-sn-glycero-3-phosphoethanolamine + H2O = N-tetradecanoylethanolamine + 1,2-di-(9Z-octadecenoyl)-sn-glycero-3-phosphate + H(+). It catalyses the reaction N-hexadecanoyl-1,2-di-(9Z-octadecenoyl)-sn-glycero-3-phosphoethanolamine + H2O = N-hexadecanoylethanolamine + 1,2-di-(9Z-octadecenoyl)-sn-glycero-3-phosphate + H(+). The enzyme catalyses N,1-dihexadecanoyl-2-(9Z,12Z-octadecadienoyl)-sn-glycero-3-phosphoethanolamine + H2O = 1-hexadecanoyl-2-(9Z,12Z-octadecadienoyl)-sn-glycero-3-phosphate + N-hexadecanoylethanolamine + H(+). The catalysed reaction is N-octadecanoyl-1,2-di-(9Z-octadecenoyl)-sn-glycero-3-phosphoethanolamine + H2O = N-octadecanoyl ethanolamine + 1,2-di-(9Z-octadecenoyl)-sn-glycero-3-phosphate + H(+). It carries out the reaction N,1,2-tri-(9Z-octadecenoyl)-sn-glycero-3-phosphoethanolamine + H2O = N-(9Z-octadecenoyl) ethanolamine + 1,2-di-(9Z-octadecenoyl)-sn-glycero-3-phosphate + H(+). It catalyses the reaction N-(5Z,8Z,11Z,14Z-eicosatetraenoyl)-1,2-diacyl-sn-glycero-3-phosphoethanolamine + H2O = N-(5Z,8Z,11Z,14Z-eicosatetraenoyl)-ethanolamine + a 1,2-diacyl-sn-glycero-3-phosphate + H(+). The enzyme catalyses N-(5Z,8Z,11Z,14Z-eicosatetraenoyl)-1,2-di-(9Z-octadecenoyl)-sn-glycero-3-phosphoethanolamine + H2O = N-(5Z,8Z,11Z,14Z-eicosatetraenoyl)-ethanolamine + 1,2-di-(9Z-octadecenoyl)-sn-glycero-3-phosphate + H(+). The catalysed reaction is 1-O-(1Z-octadecenoyl)-2-(9Z-octadecenoyl)-sn-glycero-3-phospho-N-hexadecanoyl-ethanolamine + H2O = 1-O-(1Z-octadecenoyl)-2-(9Z-octadecenoyl)-sn-glycero-3-phosphate + N-hexadecanoylethanolamine + H(+). It carries out the reaction N,1-diacyl-sn-glycero-3-phosphoethanolamine + H2O = an N-acylethanolamine + a 1-acyl-sn-glycero-3-phosphate + H(+). It catalyses the reaction N,1-dihexadecanoyl-sn-glycero-3-phosphoethanolamine + H2O = N-hexadecanoylethanolamine + 1-hexadecanoyl-sn-glycero-3-phosphate + H(+). The enzyme catalyses N-(5Z,8Z,11Z,14Z-eicosatetraenoyl)-1-(9Z-octadecenoyl)-sn-glycero-3-phosphoethanolamine + H2O = N-(5Z,8Z,11Z,14Z-eicosatetraenoyl)-ethanolamine + 1-(9Z-octadecenoyl)-sn-glycero-3-phosphate + H(+). With respect to regulation, activated by divalent cations. Activated by bile acids and their conjugates, except for lithocholic acid which is rather inhibitory. Binding of deoxycholic acid favors the selective release of anandamide and likely other unsatured long FAEs. Inhibited by phosphatidylethanolamines. Its function is as follows. D-type phospholipase that hydrolyzes N-acyl-phosphatidylethanolamines (NAPEs) to produce bioactive N-acylethanolamines/fatty acid ethanolamides (NAEs/FAEs) and phosphatidic acid. Cleaves the terminal phosphodiester bond of diacyl- and alkenylacyl-NAPEs, primarily playing a role in the generation of long-chain saturated and monounsaturated NAEs in the brain. May control NAPE homeostasis in dopaminergic neuron membranes and regulate neuron survival, partly through RAC1 activation. As a regulator of lipid metabolism in the adipose tissue, mediates the crosstalk between adipocytes, gut microbiota and immune cells to control body temperature and weight. In particular, regulates energy homeostasis by promoting cold-induced brown or beige adipocyte differentiation program to generate heat from fatty acids and glucose. Has limited D-type phospholipase activity toward N-acyl lyso-NAPEs. This is N-acyl-phosphatidylethanolamine-hydrolyzing phospholipase D (NAPEPLD) from Homo sapiens (Human).